A 103-amino-acid polypeptide reads, in one-letter code: ATP synthase F(0) complex subunit g, mitochondrial (103 aa).

N-acetylalanine is present on alanine 2. N6-acetyllysine occurs at positions 11, 24, 35, and 54.

It belongs to the ATPase g subunit family. In terms of assembly, component of the ATP synthase complex composed at least of ATP5F1A/subunit alpha, ATP5F1B/subunit beta, ATP5MC1/subunit c (homooctomer), MT-ATP6/subunit a, MT-ATP8/subunit 8, ATP5ME/subunit e, ATP5MF/subunit f, ATP5MG/subunit g, ATP5MK/subunit k, ATP5MJ/subunit j, ATP5F1C/subunit gamma, ATP5F1D/subunit delta, ATP5F1E/subunit epsilon, ATP5PF/subunit F6, ATP5PB/subunit b, ATP5PD/subunit d, ATP5PO/subunit OSCP. ATP synthase complex consists of a soluble F(1) head domain (subunits alpha(3) and beta(3)) - the catalytic core - and a membrane F(0) domain - the membrane proton channel (subunits c, a, 8, e, f, g, k and j). These two domains are linked by a central stalk (subunits gamma, delta, and epsilon) rotating inside the F1 region and a stationary peripheral stalk (subunits F6, b, d, and OSCP).

It localises to the mitochondrion. The protein localises to the mitochondrion inner membrane. Its function is as follows. Subunit g, of the mitochondrial membrane ATP synthase complex (F(1)F(0) ATP synthase or Complex V) that produces ATP from ADP in the presence of a proton gradient across the membrane which is generated by electron transport complexes of the respiratory chain. ATP synthase complex consist of a soluble F(1) head domain - the catalytic core - and a membrane F(1) domain - the membrane proton channel. These two domains are linked by a central stalk rotating inside the F(1) region and a stationary peripheral stalk. During catalysis, ATP synthesis in the catalytic domain of F(1) is coupled via a rotary mechanism of the central stalk subunits to proton translocation. In vivo, can only synthesize ATP although its ATP hydrolase activity can be activated artificially in vitro. Part of the complex F(0) domain. The sequence is that of ATP synthase F(0) complex subunit g, mitochondrial from Homo sapiens (Human).